The primary structure comprises 1118 residues: Ubiquitin carboxyl-terminal hydrolase 8 (1118 aa).

The MIT domain occupies 33–116 (TKSYVHSALK…ESLKLRYEEA (84 aa)). 2 stretches are compositionally biased toward basic and acidic residues: residues 120-146 (KKLEEKDRQEEAQRLQQKRQETGREDG) and 158-177 (LDSKDKTQKSNGEKNEKCET). Residues 120–177 (KKLEEKDRQEEAQRLQQKRQETGREDGGTLAKGSLENVLDSKDKTQKSNGEKNEKCET) are disordered. S160 carries the post-translational modification Phosphoserine. Residues 195–313 (KNISLIIMDA…WLLCYPQYTT (119 aa)) form the Rhodanese domain. Phosphoserine occurs at positions 392 and 400. The tract at residues 402 to 447 (KNVPQIDRTKKPAVKLPEEHRIKSESTNHEQQSPQSGKVIPDRSTK) is disordered. Positions 405-413 (PQIDRTKKP) match the SH3-binding motif. Positions 417 to 429 (LPEEHRIKSESTN) are enriched in basic and acidic residues. The residue at position 452 (S452) is a Phosphoserine. A compositionally biased stretch (basic and acidic residues) spans 475–573 (KNKQEKELRE…AKKSVEDRGK (99 aa)). 2 disordered regions span residues 475 to 648 (KNKQ…GRIV) and 679 to 746 (YPPE…ENKP). Position 577 is a phosphothreonine (T577). Over residues 618-645 (TFREDTDDTERNKAQREPLTRARSEEMG) the composition is skewed to basic and acidic residues. The segment covering 716 to 726 (SYSSPDITQAI) has biased composition (polar residues). A phosphoserine mark is found at S718 and S719. The USP domain occupies 777–1109 (TGLRNLGNTC…AAYILFYTSL (333 aa)). C786 serves as the catalytic Nucleophile. At T945 the chain carries Phosphothreonine. H1067 (proton acceptor) is an active-site residue.

This sequence belongs to the peptidase C19 family. As to quaternary structure, forms a ternary complex with RNF128 and OTUB1. Interacts (via C-terminal UCH catalytic domain) with OTUB1 isoform 1. Interacts with STAM2 (via SH3 domain). Interacts with DNAJB3, EGFR, EPS15, RASGRF1, RNF41, YWHAE, YWHAG and YWHAZ. Interacts with NBR1, RASGRF1, RNF41 and IST1. Associates with the ESCRT-0 complex and with microtubules. Interacts with BIRC6/bruce and KIF23/MKLP1. (Microbial infection) Interacts with Zika virus non-structural protein 1. In terms of processing, phosphorylation of Ser-718 is essential for interaction with YWHAE and for cytosol localization. Undergoes dephosphorylation at Ser-718 in the M phase. Tyrosine-phosphorylated in its N-terminal half in an EGFR-dependent manner. Post-translationally, ubiquitinated. Inactive form is mostly monoubiquitinated, but polyubiquitination happens too. Ubiquitination is increased in EGF-stimulated cells. Ubiquitination of active form is undetectable, suggesting a possibility that USP8 deubiquitinates itself, thereby regulating its own function.

The protein localises to the cytoplasm. The protein resides in the nucleus. It localises to the endosome membrane. Its subcellular location is the cell membrane. It carries out the reaction Thiol-dependent hydrolysis of ester, thioester, amide, peptide and isopeptide bonds formed by the C-terminal Gly of ubiquitin (a 76-residue protein attached to proteins as an intracellular targeting signal).. Hydrolase that can remove conjugated ubiquitin from proteins and therefore plays an important regulatory role at the level of protein turnover by preventing degradation. Converts both 'Lys-48' an 'Lys-63'-linked ubiquitin chains. Catalytic activity is enhanced in the M phase. Involved in cell proliferation. Required to enter into S phase in response to serum stimulation. May regulate T-cell anergy mediated by RNF128 via the formation of a complex containing RNF128 and OTUB1. Probably regulates the stability of STAM2 and RASGRF1. Regulates endosomal ubiquitin dynamics, cargo sorting, membrane traffic at early endosomes, and maintenance of ESCRT-0 stability. The level of protein ubiquitination on endosomes is essential for maintaining the morphology of the organelle. Deubiquitinates EPS15 and controls tyrosine kinase stability. Removes conjugated ubiquitin from EGFR thus regulating EGFR degradation and downstream MAPK signaling. Involved in acrosome biogenesis through interaction with the spermatid ESCRT-0 complex and microtubules. Deubiquitinates BIRC6/bruce and KIF23/MKLP1. Deubiquitinates BACE1 which inhibits BACE1 lysosomal degradation and modulates BACE-mediated APP cleavage and amyloid-beta formation. The sequence is that of Ubiquitin carboxyl-terminal hydrolase 8 from Homo sapiens (Human).